We begin with the raw amino-acid sequence, 907 residues long: Chloride channel protein 2 (907 aa).

At 1–93 the chain is on the cytoplasmic side; that stretch reads MAAATAAAAT…RCHKFLVSRV (93 aa). Residues 22–40 are essential for channel gating by both voltage and cell volume; sequence QYEQTLMYGRYTQELGAFA. Threonine 26 bears the Phosphothreonine mark. The modulates channel gating by both voltage and cell volume stretch occupies residues 42–55; that stretch reads EEAARIRLGGPEPW. Transmembrane regions (helical) follow at residues 94–127 and 136–161; these read GEDWIFLVLLGLLMALVSWAMDYAIAVCLQAQQW and ILLQYLAWVTYPVVLITFSAGFTQIL. The short motif at 167 to 171 is the Selectivity filter part_1 element; that stretch reads GSGIP. The helical intramembrane region spans 170-177; that stretch reads IPEMKTIL. Transmembrane regions (helical) follow at residues 186–204 and 211–229; these read LTLKTFVAKVIGLTCALGS and EGPFVHIASMCAALLSKFL. Positions 209 to 213 match the Selectivity filter part_2 motif; sequence GKEGP. 2 consecutive intramembrane regions (helical) follow at residues 245 to 257 and 261 to 269; these read MLAAACAVGVGCC and PIGGVLFSI. 5 helical membrane passes run 281 to 301, 327 to 355, 364 to 383, 435 to 455, and 463 to 486; these read YWRGFFAATFSAFIFRVLAVW, LPAFAVIGIASGFGGALFVYLNRKIVQVM, FLMKKRLLFPALVTLLISTL, ANVFLTLVIFILMKFWMSALA, and GAFMPVFVIGAAFGRLVGESMAAW. The Selectivity filter part_3 motif lies at 463-467; the sequence is GAFMP. The segment at residues 503–517 is an intramembrane region (helical); that stretch reads GGYAVVGAAALAGAV. The note=Loop between two helices intramembrane region spans 518-519; sequence TH. Residues 520 to 531 constitute an intramembrane region (helical); sequence TVSTAVIVFELT. An intramembrane region (note=Loop between two helices) is located at residues 532–536; that stretch reads GQIAH. Residues 537–554 traverse the membrane as a helical segment; sequence ILPVMIAVILANAVAQSL. Over 555–907 the chain is Cytoplasmic; the sequence is QPSLYDSIIR…TPSDSDDKCQ (353 aa). Residues 590–648 enclose the CBS 1 domain; sequence MVRDVPHVALSCTFRDLRLALHRTKGRMLALVESPESMILLGSIERSQVVALLGAQLSP. Residues 650–660 are compositionally biased toward basic residues; it reads RRRQHMQKLRK. The tract at residues 650–720 is disordered; it reads RRRQHMQKLR…NATSLQEGTT (71 aa). Residues 664 to 678 show a composition bias toward low complexity; sequence SPPSDQESPPSSETS. The segment covering 696–705 has biased composition (basic residues); sequence QTHKPLKPAL. Residues 710 to 720 are compositionally biased toward polar residues; that stretch reads SNATSLQEGTT. Position 767 is a phosphoserine (serine 767). The CBS 2 domain occupies 799–859; sequence IDPAPFQLVE…GSVTAQGVKV (61 aa). A Basolateral membrane sorting motif is present at residues 821-822; the sequence is LL. Residues 865 to 907 are disordered; the sequence is SFRDSATSSSDTETTEVHALWGPRSRHGLPREGTPSDSDDKCQ.

This sequence belongs to the chloride channel (TC 2.A.49) family. ClC-2/CLCN2 subfamily. Homodimer. Interacts with auxiliary subunit HEPACAM. In terms of processing, phosphorylated. Activated by dephosphorylation. In terms of tissue distribution, ubiquitously expressed. Expressed in neurons and glial cells (at protein level).

Its subcellular location is the cell membrane. The protein localises to the basolateral cell membrane. The protein resides in the cell projection. It is found in the dendritic spine membrane. It localises to the axon. It catalyses the reaction chloride(in) = chloride(out). The enzyme catalyses thiocyanate(in) = thiocyanate(out). It carries out the reaction bromide(in) = bromide(out). The catalysed reaction is nitrate(in) = nitrate(out). It catalyses the reaction iodide(out) = iodide(in). Common gate kinetics are down-regulated by intracellular ATP. Inhibited by AK-42, a derivative of meclofenamate. Inhibited by Cd(2+). Inhibited by Zn(2+) and PKC activation. Inhibited at acidic pH. CCLN2:HEPACAM channel conductance is up-regulated upon hypo-osmolarity. In terms of biological role, voltage-gated and osmosensitive chloride channel. Forms a homodimeric channel where each subunit has its own ion conduction pathway. Conducts double-barreled currents controlled by two types of gates, two fast glutamate gates that control each subunit independently and a slow common gate that opens and shuts off both subunits simultaneously. Displays inward rectification currents activated upon membrane hyperpolarization and extracellular hypotonicity. Contributes to chloride conductance involved in neuron excitability. In hippocampal neurons, generates a significant part of resting membrane conductance and provides an additional chloride efflux pathway to prevent chloride accumulation in dendrites upon GABA receptor activation. In glia, associates with the auxiliary subunit HEPACAM/GlialCAM at astrocytic processes and myelinated fiber tracts where it may regulate transcellular chloride flux buffering extracellular chloride and potassium concentrations. Regulates aldosterone production in adrenal glands. The opening of CLCN2 channels at hyperpolarized membrane potentials in the glomerulosa causes cell membrane depolarization, activation of voltage-gated calcium channels and increased expression of aldosterone synthase, the rate-limiting enzyme for aldosterone biosynthesis. Contributes to chloride conductance in retinal pigment epithelium involved in phagocytosis of shed photoreceptor outer segments and photoreceptor renewal. Conducts chloride currents at the basolateral membrane of epithelial cells with a role in chloride reabsorption rather than secretion. Permeable to small monovalent anions with chloride &gt; thiocyanate &gt; bromide &gt; nitrate &gt; iodide ion selectivity. This is Chloride channel protein 2 (Clcn2) from Rattus norvegicus (Rat).